Consider the following 513-residue polypeptide: Tigger transposable element-derived protein 4 (513 aa).

The region spanning 12 to 63 is the HTH psq-type domain; it reads PVTVKKKKSLSIEEKIDIINAVESGKKKAEIAAEYGIKKNSLSSIMKNKDKV. 2 consecutive DNA-binding regions (H-T-H motif) follow at residues 39–59 and 108–139; these read KAEI…IMKN and PMLR…FKSR. The HTH CENPB-type domain maps to 75–146; that stretch reads KRKRLRTAFY…KSRYGLVFRA (72 aa). One can recognise a DDE-1 domain in the interval 174–375; the sequence is YHPKNVFNVK…VTPETIVKSY (202 aa). The span at 433 to 448 shows a compositional bias: basic and acidic residues; it reads TQKDDAEWAGESKQDE. Positions 433–473 are disordered; the sequence is TQKDDAEWAGESKQDETGLYTSDEEEEDSGALEVDLPSPSK.

This sequence belongs to the tigger transposable element derived protein family.

It is found in the nucleus. The protein is Tigger transposable element-derived protein 4 (Tigd4) of Mus musculus (Mouse).